The sequence spans 118 residues: Sarafotoxin-i1 (118 aa).

Positions 1–23 are cleaved as a signal peptide; the sequence is MALLPRLAAGGLLLLLALAALDG. Positions 24–84 are excised as a propeptide; sequence KPAPPKLLQK…LSPLRKPQPL (61 aa). 2 disulfide bridges follow: Cys-85/Cys-99 and Cys-87/Cys-95. Residues 112–118 constitute a propeptide that is removed on maturation; that stretch reads PSPIQSS.

It belongs to the endothelin/sarafotoxin family. Post-translationally, different length molecules ranging from 15 (85-99) to 30 amino acids (85-114) have been found in the venom. As to expression, expressed by the venom gland.

The protein resides in the secreted. Vasoconstrictor activity. These toxins cause cardiac arrest probably as a result of coronary vasospasm. Functionally, sarafotoxin-i3: vasoconstrictor activity. Causes cardiac arrest probably as a result of coronary vasospasm. Displays low agonistic activities towards endothelin-2 receptor (EDNRB) (displays affinity in the micromolar range). This chain is Sarafotoxin-i1, found in Atractaspis irregularis (Variable burrowing asp).